Consider the following 427-residue polypeptide: MSEFWLISAPGDKENLQALERMNTVTSKSNLSYNTKFAIPDFKVGTLDSLVGLSDELGKLDTFAESLIRRMAQSVVEVMEDSKGKVQEHLLANGVDLTSFVTHFEWDMAKYPVKQPLVSVVDTIAKQLAQIEMDLKSRTAAYNTLKTNLENLEKKSMGNLFTRTLSDIVSKEDFVLDSEYLVTLLVIVPKPNYSQWQKTYESLSDMVVPRSTKLITEDKEGGLFTVTLFRKVIEDFKTKAKENKFTVREFYYDEKEIEREREEMARLLSDKKQQYQTSCVALKKGSSTFPDHKVKVTPLGNPDRPAAGQTDRERESEGEGEGPLLRWLKVNFSEAFIAWIHIKALRVFVESVLRYGLPVNFQAVLLQPHKKSSTKRLREVLNSVFRHLDEVAATSILDASVEIPGLQLNNQDYFPYVYFHIDLSLLD.

The tract at residues 292 to 319 is disordered; the sequence is HKVKVTPLGNPDRPAAGQTDRERESEGE.

Belongs to the V-ATPase C subunit family. In terms of assembly, V-ATPase is a heteromultimeric enzyme made up of two complexes: the ATP-hydrolytic V1 complex and the proton translocation V0 complex. The V1 complex consists of three catalytic AB heterodimers that form a heterohexamer, three peripheral stalks each consisting of EG heterodimers, one central rotor including subunits D and F, and the regulatory subunits C and H. The proton translocation complex V0 consists of the proton transport subunit a, a ring of proteolipid subunits c9c'', rotary subunit d, subunits e and f, and the accessory subunits ATP6AP1/Ac45 and ATP6AP2/PRR. In terms of tissue distribution, kidney and placenta.

In terms of biological role, subunit of the V1 complex of vacuolar(H+)-ATPase (V-ATPase), a multisubunit enzyme composed of a peripheral complex (V1) that hydrolyzes ATP and a membrane integral complex (V0) that translocates protons. V-ATPase is responsible for acidifying and maintaining the pH of intracellular compartments and in some cell types, is targeted to the plasma membrane, where it is responsible for acidifying the extracellular environment. Subunit C is necessary for the assembly of the catalytic sector of the enzyme and is likely to have a specific function in its catalytic activity. This chain is V-type proton ATPase subunit C 2 (ATP6V1C2), found in Homo sapiens (Human).